Consider the following 421-residue polypeptide: Actin-related protein 6 (421 aa).

Belongs to the actin family. ARP6 subfamily. As to quaternary structure, component of the SWR1 chromatin-remodeling complex composed of at least ARP6/ESD1/SUF3, PIE1, SWC6, SWC2 and H2AZs (HTA8, HTA9, HTA11). Interacts directly with SWC6/SEF and PIE1. Also interacts with H2A.F/Z proteins. In terms of tissue distribution, mostly expressed in flowers, and, to a lower extent, in seedlings, shoot apex, stems, siliques, seeds, and roots (at protein level).

It localises to the nucleus. The protein resides in the cytoplasm. Functionally, component of the SWR1 complex which mediates the ATP-dependent exchange of histone H2A for the H2A variant H2A.F/Z leading to transcriptional regulation of selected genes (e.g. FLC) by chromatin remodeling. Binds to the promoter region of FLC chromatin. Required for the activation of FLC and FLC/MAF genes expression to levels that inhibit flowering, through both histone H3 and H4 acetylation and methylation mechanisms. Involved in several developmental processes including organization of plant organs, leaves formation, flowering time repression, and fertility. Modulates photoperiod-dependent epidermal leaves cell development; promotes cell division in long days, and cell expansion/division in short days. May be involved in the regulation of pathogenesis-related proteins (PRs). In Arabidopsis thaliana (Mouse-ear cress), this protein is Actin-related protein 6 (ARP6).